A 464-amino-acid chain; its full sequence is Antithrombin-III (464 aa).

Residues 1–32 form the signal peptide; that stretch reads MYSNVIGTVTSGKRKVYLLSLLLIGFWDCVTC. Disulfide bonds link Cys-40–Cys-160 and Cys-53–Cys-127. Residue Thr-63 is modified to Phosphothreonine; by FAM20C. Phosphoserine; by FAM20C is present on Ser-68. Position 81 (Trp-81) interacts with heparin. Asn-128 is a glycosylation site (N-linked (GlcNAc...) asparagine). Arg-161 contacts heparin. Asn-167 is a glycosylation site (N-linked (GlcNAc...) asparagine). Arg-177 provides a ligand contact to heparin. An N-linked (GlcNAc...) (complex) asparagine glycan is attached at Asn-187. Residue Asn-224 is glycosylated (N-linked (GlcNAc...) asparagine). Cys-279 and Cys-462 form a disulfide bridge.

The protein belongs to the serpin family. Forms protease inhibiting heterodimer with TMPRSS7. Post-translationally, phosphorylated by FAM20C in the extracellular medium. As to expression, found in plasma.

The protein localises to the secreted. It localises to the extracellular space. Most important serine protease inhibitor in plasma that regulates the blood coagulation cascade. AT-III inhibits thrombin, matriptase-3/TMPRSS7, as well as factors IXa, Xa and XIa. Its inhibitory activity is greatly enhanced in the presence of heparin. In Homo sapiens (Human), this protein is Antithrombin-III (SERPINC1).